The primary structure comprises 419 residues: Protein-lysine N-methyltransferase EFM2 (419 aa).

Residues tryptophan 222, 261–263 (GAG), aspartate 290, tryptophan 318, and alanine 340 each bind S-adenosyl-L-methionine.

It belongs to the class I-like SAM-binding methyltransferase superfamily. METTL21 family.

Its subcellular location is the cytoplasm. In terms of biological role, S-adenosyl-L-methionine-dependent protein-lysine N-methyltransferase that mono- and dimethylates elongation factor 2 (EFT1/EFT2) at 'Lys-613' and methylates elongation factor 3A (YEF3). In Saccharomyces cerevisiae (strain ATCC 204508 / S288c) (Baker's yeast), this protein is Protein-lysine N-methyltransferase EFM2.